The chain runs to 319 residues: Forkhead box protein E3 (319 aa).

A disordered region spans residues 1 to 69; that stretch reads MAGRSDMDPP…GRRRRRPLQR (69 aa). The span at 44-53 shows a compositional bias: low complexity; sequence AAAGRGEAAP. The segment at residues 71–165 is a DNA-binding region (fork-head); it reads KPPYSYIALI…DNGSFLRRRK (95 aa).

Its subcellular location is the nucleus. Its function is as follows. Transcription factor that controls lens epithelial cell growth through regulation of proliferation, apoptosis and cell cycle. During lens development, controls the ratio of the lens fiber cells to the cells of the anterior lens epithelium by regulating the rate of proliferation and differentiation. Controls lens vesicle closure and subsequent separation of the lens vesicle from ectoderm. Controls the expression of DNAJB1 in a pathway that is crucial for the development of the anterior segment of the eye. This Homo sapiens (Human) protein is Forkhead box protein E3 (FOXE3).